A 175-amino-acid polypeptide reads, in one-letter code: Alpha-crystallin B chain (175 aa).

M1 is modified (N-acetylmethionine). Position 19 is a phosphoserine (S19). A glycan (O-linked (GlcNAc) serine) is linked at S41. A phosphoserine mark is found at S45 and S59. Residues 56–164 (RAPSWIDTGL…PERTIPITRE (109 aa)) form the sHSP domain. H83 provides a ligand contact to Zn(2+). K92 bears the N6-acetyllysine mark. Residues H104, E106, H111, and H119 each coordinate Zn(2+). Residues 142-175 (VLTVNGPRKQASGPERTIPITREEKPAVTAAPKK) are disordered. K166 carries the post-translational modification N6-acetyllysine. O-linked (GlcNAc) threonine glycosylation is present at T170.

It belongs to the small heat shock protein (HSP20) family. Heteromer composed of three CRYAA and one CRYAB subunits. Aggregates with homologous proteins, including the small heat shock protein HSPB1, to form large heteromeric complexes. Inter-subunit bridging via zinc ions enhances stability, which is crucial as there is no protein turn over in the lens. Interacts with HSPBAP1 and TTN/titin. Interacts with TMEM109; in the cellular response to DNA damage. Interacts with DES; binds rapidly during early stages of DES filament assembly and a reduced binding seen in the later stages. Interacts with ATP6V1A and with MTOR, forming a ternary complex. As to expression, lens as well as other tissues.

Its subcellular location is the cytoplasm. The protein localises to the nucleus. It localises to the secreted. It is found in the lysosome. Its function is as follows. May contribute to the transparency and refractive index of the lens. Has chaperone-like activity, preventing aggregation of various proteins under a wide range of stress conditions. In lens epithelial cells, stabilizes the ATP6V1A protein, preventing its degradation by the proteasome. This Spalax judaei (Judean Mountains blind mole rat) protein is Alpha-crystallin B chain (CRYAB).